Consider the following 131-residue polypeptide: MNKQRFLFAAKISGIHFLLSLTVAALLAGLIFFVWYPFPYQKIMGNFKLFFLISGIDVCCGPLLTFILSNPQKRLKECIIDFSLIIFIQLSAFIYGMYNIYLARPVAVVFELDSIRILSKGDILLDELPQA.

The sequence is that of Fimbrial assembly protein, serogroups C1 and C2 (fimB) from Dichelobacter nodosus (Bacteroides nodosus).